We begin with the raw amino-acid sequence, 115 residues long: Hydrogenase maturation factor HypA (115 aa).

Ni(2+) is bound at residue H2. Zn(2+)-binding residues include C74, C77, C90, and C93.

This sequence belongs to the HypA/HybF family.

Functionally, involved in the maturation of [NiFe] hydrogenases. Required for nickel insertion into the metal center of the hydrogenase. The polypeptide is Hydrogenase maturation factor HypA (Desulfosudis oleivorans (strain DSM 6200 / JCM 39069 / Hxd3) (Desulfococcus oleovorans)).